The following is a 317-amino-acid chain: NAD kinase (317 aa).

D82 acts as the Proton acceptor in catalysis. NAD(+) is bound by residues 82–83 (DG), R87, 157–158 (NE), D187, and 198–203 (TAYAFS).

This sequence belongs to the NAD kinase family. Requires a divalent metal cation as cofactor.

It localises to the cytoplasm. It catalyses the reaction NAD(+) + ATP = ADP + NADP(+) + H(+). In terms of biological role, involved in the regulation of the intracellular balance of NAD and NADP, and is a key enzyme in the biosynthesis of NADP. Catalyzes specifically the phosphorylation on 2'-hydroxyl of the adenosine moiety of NAD to yield NADP. This Corynebacterium diphtheriae (strain ATCC 700971 / NCTC 13129 / Biotype gravis) protein is NAD kinase.